The sequence spans 45 residues: Ice-structuring protein SS-8 (45 aa).

The residue at position 1 (Met1) is a Blocked amino end (Met). 3 repeats span residues 9–21, 22–33, and 34–45; these read KAAR…ALAA, KTAADAAAKAAA, and KAAAIAAAAASA.

The protein belongs to the type-I AFP family.

In terms of biological role, antifreeze proteins lower the blood freezing point. In Myoxocephalus scorpius (Shorthorn sculpin), this protein is Ice-structuring protein SS-8.